We begin with the raw amino-acid sequence, 198 residues long: Nucleoid occlusion factor SlmA (198 aa).

Positions 10–70 (NRREEILQSL…SLIEFIEDSL (61 aa)) constitute an HTH tetR-type domain. A DNA-binding region (H-T-H motif) is located at residues 33–52 (TTAKLAASVGVSEAALYRHF). The stretch at 117–145 (EQDKLQGRINQLFERIEAQLRQVLREKKM) forms a coiled coil.

The protein belongs to the nucleoid occlusion factor SlmA family. As to quaternary structure, homodimer. Interacts with FtsZ.

Its subcellular location is the cytoplasm. It localises to the nucleoid. In terms of biological role, required for nucleoid occlusion (NO) phenomenon, which prevents Z-ring formation and cell division over the nucleoid. Acts as a DNA-associated cell division inhibitor that binds simultaneously chromosomal DNA and FtsZ, and disrupts the assembly of FtsZ polymers. SlmA-DNA-binding sequences (SBS) are dispersed on non-Ter regions of the chromosome, preventing FtsZ polymerization at these regions. The sequence is that of Nucleoid occlusion factor SlmA from Enterobacter sp. (strain 638).